Here is a 335-residue protein sequence, read N- to C-terminus: Methionine import ATP-binding protein MetN 1 (335 aa).

In terms of domain architecture, ABC transporter spans 2–242; sequence IEFHNVHKTY…PQHATTRRFV (241 aa). 38–45 contributes to the ATP binding site; it reads GHSGAGKS.

It belongs to the ABC transporter superfamily. Methionine importer (TC 3.A.1.24) family. The complex is composed of two ATP-binding proteins (MetN), two transmembrane proteins (MetI) and a solute-binding protein (MetQ).

It localises to the cell inner membrane. It catalyses the reaction L-methionine(out) + ATP + H2O = L-methionine(in) + ADP + phosphate + H(+). The enzyme catalyses D-methionine(out) + ATP + H2O = D-methionine(in) + ADP + phosphate + H(+). Functionally, part of the ABC transporter complex MetNIQ involved in methionine import. Responsible for energy coupling to the transport system. This Pseudomonas syringae pv. syringae (strain B728a) protein is Methionine import ATP-binding protein MetN 1.